A 310-amino-acid polypeptide reads, in one-letter code: Prostate androgen-regulated mucin-like protein 1 homolog (310 aa).

The first 20 residues, 1–20 (MVYKTLFALCILTAGWRVQS), serve as a signal peptide directing secretion. The Extracellular portion of the chain corresponds to 21–258 (LPTSAPLSVS…EVEHALSSGS (238 aa)). Over residues 40–74 (TIWTSSPQNTDADTASPSNGTHNNSVLPVTASAPT) the composition is skewed to polar residues. A disordered region spans residues 40–224 (TIWTSSPQNT…VPQEKTPPTT (185 aa)). 3 N-linked (GlcNAc...) asparagine glycosylation sites follow: Asn58, Asn62, and Asn80. Over residues 92 to 103 (SPGSNWEGTNTD) the composition is skewed to polar residues. Residues 150–209 (SPQAPASSPSSLSTSPPEVFSVSVTTNHSSTVTSTQPTGAPTAPESPTEESSSDHTPTSH) show a composition bias toward low complexity. An N-linked (GlcNAc...) asparagine glycan is attached at Asn176. Residues 259 to 279 (IAAITVTVIAVVLLVFGVAAY) form a helical membrane-spanning segment. The Cytoplasmic segment spans residues 280-310 (LKIRHSSYGRLLDDHDYGSWGNYNNPLYDDS). At Ser298 the chain carries Phosphoserine.

The protein belongs to the PARM family. Highly N-glycosylated and O-glycosylated.

The protein resides in the cell membrane. Its subcellular location is the golgi apparatus membrane. The protein localises to the endosome membrane. In terms of biological role, may regulate TLP1 expression and telomerase activity, thus enabling certain prostatic cells to resist apoptosis. The chain is Prostate androgen-regulated mucin-like protein 1 homolog (PARM1) from Pongo abelii (Sumatran orangutan).